The following is a 653-amino-acid chain: Brain-enriched guanylate kinase-associated protein (653 aa).

Tyr-186 carries the phosphotyrosine modification. A disordered region spans residues 241-271; that stretch reads PGSLSSHLSEASAQDLGFPEGLEKPGSRPPY. The span at 243–252 shows a compositional bias: polar residues; the sequence is SLSSHLSEAS. Residues Ser-249, Ser-278, Ser-295, and Ser-314 each carry the phosphoserine modification. Positions 288–329 are disordered; that stretch reads RHQDRRPSVEGPGSDVGFLQAQNSTDSTAEEEEEEEEDTEAG. Positions 315 to 327 are enriched in acidic residues; that stretch reads TAEEEEEEEEDTE. Phosphoserine occurs at positions 400 and 427. Arg-435 carries the post-translational modification Asymmetric dimethylarginine. Phosphoserine is present on residues Ser-523, Ser-533, Ser-535, Ser-558, Ser-560, Ser-564, Ser-613, and Ser-623. The interval 587–653 is disordered; sequence GASGSPEPEL…KAQLYGTLLN (67 aa).

As to quaternary structure, interacts with DLG4 and DLGAP1 and forms a ternary complex.

The protein resides in the cytoplasm. The protein localises to the membrane. In terms of biological role, may sustain the structure of the postsynaptic density (PSD). This chain is Brain-enriched guanylate kinase-associated protein (BEGAIN), found in Ovis aries (Sheep).